The primary structure comprises 502 residues: ATP synthase subunit beta, chloroplastic (502 aa).

Ser-17 carries the phosphoserine modification. An ATP-binding site is contributed by 176 to 183 (GGAGVGKT).

It belongs to the ATPase alpha/beta chains family. F-type ATPases have 2 components, CF(1) - the catalytic core - and CF(0) - the membrane proton channel. CF(1) has five subunits: alpha(3), beta(3), gamma(1), delta(1), epsilon(1). CF(0) has four main subunits: a(1), b(1), b'(1) and c(9-12).

The protein localises to the plastid. The protein resides in the chloroplast thylakoid membrane. It carries out the reaction ATP + H2O + 4 H(+)(in) = ADP + phosphate + 5 H(+)(out). Its function is as follows. Produces ATP from ADP in the presence of a proton gradient across the membrane. The catalytic sites are hosted primarily by the beta subunits. This chain is ATP synthase subunit beta, chloroplastic, found in Lepidium virginicum (Virginia pepperweed).